We begin with the raw amino-acid sequence, 269 residues long: Hydroxyethylthiazole kinase (269 aa).

Residue Met45 coordinates substrate. ATP-binding residues include Arg121 and Thr167. Gly194 lines the substrate pocket.

This sequence belongs to the Thz kinase family. Mg(2+) is required as a cofactor.

The catalysed reaction is 5-(2-hydroxyethyl)-4-methylthiazole + ATP = 4-methyl-5-(2-phosphooxyethyl)-thiazole + ADP + H(+). The protein operates within cofactor biosynthesis; thiamine diphosphate biosynthesis; 4-methyl-5-(2-phosphoethyl)-thiazole from 5-(2-hydroxyethyl)-4-methylthiazole: step 1/1. Functionally, catalyzes the phosphorylation of the hydroxyl group of 4-methyl-5-beta-hydroxyethylthiazole (THZ). The sequence is that of Hydroxyethylthiazole kinase from Bacillus cytotoxicus (strain DSM 22905 / CIP 110041 / 391-98 / NVH 391-98).